A 57-amino-acid chain; its full sequence is MAEIKVGKNETLDSALRRFKKQCSKSGVLSEAKKRKHYEKPSEKRKRKATEKRNSRK.

The interval Gln-22–Lys-57 is disordered. Over residues Lys-33–Lys-57 the composition is skewed to basic residues.

Belongs to the bacterial ribosomal protein bS21 family.

The chain is Small ribosomal subunit protein bS21 from Natranaerobius thermophilus (strain ATCC BAA-1301 / DSM 18059 / JW/NM-WN-LF).